The primary structure comprises 232 residues: Lipoprotein-releasing system ATP-binding protein LolD (232 aa).

The region spanning 11–231 (VYLHDIKRQY…SIEDGVIVEL (221 aa)) is the ABC transporter domain. Residue 47-54 (APSGSGKS) coordinates ATP.

This sequence belongs to the ABC transporter superfamily. Lipoprotein translocase (TC 3.A.1.125) family. In terms of assembly, the complex is composed of two ATP-binding proteins (LolD) and two transmembrane proteins (LolC and LolE).

Its subcellular location is the cell inner membrane. In terms of biological role, part of the ABC transporter complex LolCDE involved in the translocation of mature outer membrane-directed lipoproteins, from the inner membrane to the periplasmic chaperone, LolA. Responsible for the formation of the LolA-lipoprotein complex in an ATP-dependent manner. The protein is Lipoprotein-releasing system ATP-binding protein LolD of Rhodopseudomonas palustris (strain BisB5).